A 719-amino-acid chain; its full sequence is Fusicoccadiene synthase (719 aa).

The segment at 1–334 is fusicocca-2,10(14)-diene synthase; the sequence is MEFKYSEVVE…RYNPDVSFNK (334 aa). Residues Asp-92 and Asp-96 each coordinate Mg(2+). The tract at residues 335–719 is geranylgeranyl diphosphate synthase; sequence TQLEWMRQGL…MRLLLELLRV (385 aa). The segment at 358 to 404 is disordered; it reads EIDSDESAVSPTADESDSTEDSLGSGSRQDSSLSTGLSLSPVHSNEG. The span at 378–400 shows a compositional bias: polar residues; that stretch reads DSLGSGSRQDSSLSTGLSLSPVH. Isopentenyl diphosphate-binding residues include Lys-435, Arg-438, and His-467. Residues Asp-474 and Asp-478 each coordinate Mg(2+). Dimethylallyl diphosphate is bound at residue Arg-483. An isopentenyl diphosphate-binding site is contributed by Arg-484. Residues Lys-561, Thr-562, Gln-602, Asn-609, Lys-619, and Lys-629 each contribute to the dimethylallyl diphosphate site.

The protein in the N-terminal section; belongs to the terpene synthase family. It in the C-terminal section; belongs to the FPP/GGPP synthase family. Hexamer.

The enzyme catalyses geranylgeranyl diphosphate = fusicocca-2,10(14)-diene + diphosphate. It carries out the reaction isopentenyl diphosphate + (2E,6E)-farnesyl diphosphate = (2E,6E,10E)-geranylgeranyl diphosphate + diphosphate. It functions in the pathway mycotoxin biosynthesis. Functionally, multifunctional diterpene synthase; part of the 2 gene clusters that mediate the biosynthesis of fusicoccins, diterpene glucosides that display phytohormone-like activity and function as potent activators of plasma membrane H(+)-ATPases in plants by modifying 14-3-3 proteins and cause the plant disease constriction canker. The first step in the pathway is performed by the fusicoccadiene synthase PaFS that possesses both prenyl transferase and terpene cyclase activity, converting isopentenyl diphosphate and dimethylallyl diphosphate into geranylgeranyl diphosphate (GGDP) and successively converting GGDP into fusicocca-2,10(14)-diene, a precursor for fusicoccin H. Fusicoccadiene synthase is an allosteric enzyme for GGPP cyclization that generates 64% fusicoccadiene, 9% delta-araneosene, and one additional unidentified diterpene product, when incubated with GGPP. In the absence of isopentenyl diphosphate (IPP), PaFS can also solvolyze the shorter chain geranyl diphosphate (GPP) and farnesyl diphosphate (FPP) as alternative substrates to yield predominantly acyclic products. FPP is converted to farnesol (60.5%), nerolidol (14.0%), and farnesene (14.0%), while GPP is converted to a mixture of geraniol (59.5%) and linalool (35.0%). The second step is the oxidation at the C-8 position by the cytochrome P450 monooxygenase PaP450-2 to yield fusicocca-2,10(14)-diene-8-beta-ol. The cytochrome P450 monooxygenase PaP450-1 then catalyzes the hydroxylation at the C-16 position to produce fusicocca-2,10(14)-diene-8-beta,16-diol. The dioxygenase fc-dox then catalyzes the 16-oxydation of fusicocca-2,10(14)-diene-8-beta,16-diol to yield an aldehyde (8-beta-hydroxyfusicocca-1,10(14)-dien-16-al). The short-chain dehydrogenase/reductase fc-sdr catalyzes the reduction of the aldehyde to yield fusicocca-1,10(14)-diene-8-beta,16-diol. The next step is the hydroxylation at C-9 performed by the cytochrome P450 monooxygenase PaP450-3 that leads to fusicoccin H aglycon which is glycosylated to fusicoccin H by the O-glycosyltransferase PAGT. Hydroxylation at C-12 by the cytochrome P450 monooxygenase PaP450-4 leads then to the production of fusicoccin Q and is followed by methylation by the O-methyltransferase PAMT to yield fusicoccin P. Fusicoccin P is further converted to fusicoccin J via prenylation by the O-glucose prenyltransferase PaPT. Cytochrome P450 monooxygenase PaP450-5 then performs hydroxylation at C-19 to yield dideacetyl-fusicoccin A which is acetylated to 3'-O-deacetyl-fusicoccin A by the O-acetyltransferase PaAT-2. Finally, a another acetylation by the O-acetyltransferase PaAT-1 yields fusicoccin A. In Phomopsis amygdali (Fusicoccum amygdali), this protein is Fusicoccadiene synthase.